A 248-amino-acid polypeptide reads, in one-letter code: Proteasome subunit alpha (248 aa).

Belongs to the peptidase T1A family. The 20S proteasome core is composed of 14 alpha and 14 beta subunits that assemble into four stacked heptameric rings, resulting in a barrel-shaped structure. The two inner rings, each composed of seven catalytic beta subunits, are sandwiched by two outer rings, each composed of seven alpha subunits. The catalytic chamber with the active sites is on the inside of the barrel. Has a gated structure, the ends of the cylinder being occluded by the N-termini of the alpha-subunits. Is capped by the proteasome-associated ATPase, ARC.

It localises to the cytoplasm. The protein operates within protein degradation; proteasomal Pup-dependent pathway. Its activity is regulated as follows. The formation of the proteasomal ATPase ARC-20S proteasome complex, likely via the docking of the C-termini of ARC into the intersubunit pockets in the alpha-rings, may trigger opening of the gate for substrate entry. Interconversion between the open-gate and close-gate conformations leads to a dynamic regulation of the 20S proteasome proteolysis activity. Functionally, component of the proteasome core, a large protease complex with broad specificity involved in protein degradation. In Mycobacterium bovis (strain BCG / Pasteur 1173P2), this protein is Proteasome subunit alpha.